Consider the following 498-residue polypeptide: tRNA-2-methylthio-N(6)-dimethylallyladenosine synthase (498 aa).

The MTTase N-terminal domain occupies 2-118 (PRYSITTFGC…LPGLLGDLAI (117 aa)). The [4Fe-4S] cluster site is built by C11, C47, C81, C163, C167, and C170. One can recognise a Radical SAM core domain in the interval 149-393 (PRAAPTAFVT…FEESEALLAA (245 aa)). One can recognise a TRAM domain in the interval 396-467 (SALVGTTQEV…KHSLQAELTE (72 aa)). The tract at residues 469 to 498 (ARAAARPRQRGGLEPRPARRSLPVVAAEGG) is disordered.

The protein belongs to the methylthiotransferase family. MiaB subfamily. In terms of assembly, monomer. Requires [4Fe-4S] cluster as cofactor.

Its subcellular location is the cytoplasm. It catalyses the reaction N(6)-dimethylallyladenosine(37) in tRNA + (sulfur carrier)-SH + AH2 + 2 S-adenosyl-L-methionine = 2-methylsulfanyl-N(6)-dimethylallyladenosine(37) in tRNA + (sulfur carrier)-H + 5'-deoxyadenosine + L-methionine + A + S-adenosyl-L-homocysteine + 2 H(+). Its function is as follows. Catalyzes the methylthiolation of N6-(dimethylallyl)adenosine (i(6)A), leading to the formation of 2-methylthio-N6-(dimethylallyl)adenosine (ms(2)i(6)A) at position 37 in tRNAs that read codons beginning with uridine. This is tRNA-2-methylthio-N(6)-dimethylallyladenosine synthase from Sorangium cellulosum (strain So ce56) (Polyangium cellulosum (strain So ce56)).